Here is a 1706-residue protein sequence, read N- to C-terminus: Cadherin-99C (1706 aa).

An N-terminal signal peptide occupies residues 1–28; the sequence is MAARNSLTPQQGLGFFGLLILLCSAVLG. Residues 29–1395 lie on the Extracellular side of the membrane; the sequence is KSQMCEVETG…AIDNEVFPFT (1367 aa). 11 consecutive Cadherin domains span residues 68 to 142, 143 to 264, 277 to 387, 388 to 500, 519 to 604, 605 to 704, 707 to 807, 808 to 908, 909 to 1005, 1038 to 1148, and 1156 to 1270; these read DPDT…APRF, MNTP…DPSF, INPE…PPVI, SSSQ…APKL, VTQV…PPRF, QKPI…NPEF, STLP…VPKF, SDAR…PPRF, ITVP…RVDV, SDDS…APEF, and QQDT…ALSF. 2 N-linked (GlcNAc...) asparagine glycosylation sites follow: Asn105 and Asn188. N-linked (GlcNAc...) asparagine glycosylation is found at Asn442, Asn553, Asn620, and Asn753. 3 N-linked (GlcNAc...) asparagine glycosylation sites follow: Asn1053, Asn1088, and Asn1108. 2 N-linked (GlcNAc...) asparagine glycosylation sites follow: Asn1311 and Asn1367. A helical transmembrane segment spans residues 1396–1416; sequence LIAISLVILILGTIGIIYICI. Residues 1417-1706 are Cytoplasmic-facing; that stretch reads SWSKYKNFKQ…RSEVETTTEL (290 aa).

As to quaternary structure, interacts (via the cytoplasmic domain) with ck. Interacts (via the cytoplasmic domain) with Cul1 and Ubr3.

The protein resides in the apical cell membrane. Its subcellular location is the endosome membrane. It localises to the cell projection. The protein localises to the microvillus membrane. In terms of biological role, cadherin that functions in epithelial morphogenesis and the intestine epithelial immune response. Essential for female fertility. Regulates the length and organization of apical microvilli in developing follicle cells and salivary glands. Function in the follicle cell is essential for egg development as the microvilli secrete eggshell material such as the vitelline membrane. Acts at least in part by regulating the recruitment of the myosin ck to the follicle cell microvilli. Also required to regulate cell rearrangements during salivary tube elongation, possibly by modulating cellular adhesion between the apical surface and apical extracellular matrix during epithelial tube elongation. May also function in cellular adhesion during the development of other tubular epithelia such as the trachea. Possibly functions as an apical membrane determinant which acts in apical membrane expansion during salivary and tracheal epithelial tube elongation. In salivary gland development, this function is independent of the other apical membrane determinants crb and sas. Essential downstream component of a hh-signaling pathway which regulates the Duox-dependent gut epithelial immune response to bacterial uracil; required for endosome formation in the enterocyte and activating norpA-dependent Ca2+ mobilization, which are essential steps in the Duox-dependent production of reactive oxygen species (ROS) in response to intestinal bacterial infection. This Drosophila melanogaster (Fruit fly) protein is Cadherin-99C.